The sequence spans 244 residues: 6-carboxyhexanoate--CoA ligase (244 aa).

It belongs to the BioW family. Homodimer. Requires Mg(2+) as cofactor.

The enzyme catalyses heptanedioate + ATP + CoA = 6-carboxyhexanoyl-CoA + AMP + diphosphate. Its pathway is metabolic intermediate metabolism; pimeloyl-CoA biosynthesis; pimeloyl-CoA from pimelate: step 1/1. In terms of biological role, catalyzes the transformation of pimelate into pimeloyl-CoA with concomitant hydrolysis of ATP to AMP. The polypeptide is 6-carboxyhexanoate--CoA ligase (Methanococcus maripaludis (strain C6 / ATCC BAA-1332)).